A 181-amino-acid polypeptide reads, in one-letter code: Peptide deformylase 2 (181 aa).

Residues Cys-109 and His-151 each coordinate Fe cation. Residue Glu-152 is part of the active site. His-155 is a binding site for Fe cation.

The protein belongs to the polypeptide deformylase family. The cofactor is Fe(2+).

It catalyses the reaction N-terminal N-formyl-L-methionyl-[peptide] + H2O = N-terminal L-methionyl-[peptide] + formate. Its function is as follows. Removes the formyl group from the N-terminal Met of newly synthesized proteins. Requires at least a dipeptide for an efficient rate of reaction. N-terminal L-methionine is a prerequisite for activity but the enzyme has broad specificity at other positions. In Shewanella oneidensis (strain ATCC 700550 / JCM 31522 / CIP 106686 / LMG 19005 / NCIMB 14063 / MR-1), this protein is Peptide deformylase 2.